Consider the following 125-residue polypeptide: uncharacterized protein (125 aa).

The protein localises to the plastid. Its subcellular location is the chloroplast. This is an uncharacterized protein from Guillardia theta (Cryptophyte).